Consider the following 301-residue polypeptide: Mitochondrial ornithine transporter 1 (301 aa).

The next 6 membrane-spanning stretches (helical) occupy residues 5–25, 68–88, 110–130, 168–188, 207–227, and 237–257; these read PAIQ…ACVL, SPAL…YGFC, AAAG…TELV, GFYH…FFFF, LGPV…WLAV, and IQVL…LSIV. 3 Solcar repeats span residues 7-91, 104-197, and 207-293; these read IQAA…CQQV, LSDL…SRSF, and LGPV…SRKL.

Belongs to the mitochondrial carrier (TC 2.A.29) family. In terms of tissue distribution, widely expressed, with highest levels in the liver, testis and kidney. In the brain, expressed at high levels in the hypothalamus.

The protein resides in the mitochondrion inner membrane. It is found in the mitochondrion membrane. It catalyses the reaction L-citrulline(in) + L-ornithine(out) + H(+)(in) = L-citrulline(out) + L-ornithine(in) + H(+)(out). The catalysed reaction is L-ornithine(in) + L-arginine(out) = L-ornithine(out) + L-arginine(in). It carries out the reaction L-ornithine(out) + L-lysine(in) = L-ornithine(in) + L-lysine(out). The enzyme catalyses L-lysine(out) + H(+)(in) = L-lysine(in) + H(+)(out). It catalyses the reaction L-ornithine(out) + H(+)(in) = L-ornithine(in) + H(+)(out). Inhibited by pyridoxal 5'-phosphate as well as by mercurials (mersalyl, p-chloromercuribenzene sulfonate, and mercuric chloride), N-ethylmaleimide and spermine. Its function is as follows. Mitochondrial ornithine-citrulline antiporter. Catalyzes the exchange between cytosolic ornithine and mitochondrial citrulline plus an H(+), the proton compensates the positive charge of ornithine thus leading to an electroneutral transport. Plays a crucial role in the urea cycle, by connecting the cytosolic and the intramitochondrial reactions of the urea cycle. Lysine and arginine are also transported by the antiport mechanism. In addition, catalyzes an electroneutral exchange of ornithine or lysine for H(+), a reaction driven by the pH gradient across the inner membrane. In Mus musculus (Mouse), this protein is Mitochondrial ornithine transporter 1.